The primary structure comprises 405 residues: MSAQPISDFYAYPDAAGHFGQFGGRFVAETLIGPLQELSAAYDQARQDPSFIAEYDKDLKHYVGRPSPIYHAERLSREVGGAQILLKREDLNHTGAHKINNTIGQALLASRMGKTRIIAETGAGQHGVASATVAARLGLECVVYMGATDIERQKINVYRMKLLGATVIPVTSGSATLKDALNEAMRDWVTNVRDTFYIIGTVAGPDPYPRMVRDFNAIVGREAREQMLQDYGRLPDAISACVGGGSNAIGLFHAFLNDPGVKIYGAEAAGDGIATGRHAASIAAGRPGVLHGNRTYVICDDDGQITETHSISAGLDYPGVGPEHSFLSDSGRAVYQGITDDEAMAAFHLLAHTEGILAALESSHAVAQSIKLARELPRDALVLCNLSGRGDKDVHTIAAREGIAL.

Lys98 carries the post-translational modification N6-(pyridoxal phosphate)lysine.

It belongs to the TrpB family. In terms of assembly, tetramer of two alpha and two beta chains. It depends on pyridoxal 5'-phosphate as a cofactor.

The catalysed reaction is (1S,2R)-1-C-(indol-3-yl)glycerol 3-phosphate + L-serine = D-glyceraldehyde 3-phosphate + L-tryptophan + H2O. It functions in the pathway amino-acid biosynthesis; L-tryptophan biosynthesis; L-tryptophan from chorismate: step 5/5. The beta subunit is responsible for the synthesis of L-tryptophan from indole and L-serine. The chain is Tryptophan synthase beta chain from Xanthomonas axonopodis pv. citri (strain 306).